We begin with the raw amino-acid sequence, 355 residues long: Probable nitronate monooxygenase (355 aa).

FMN is bound by residues N71, Q175, G180, G218, and 237 to 240 (QMGT).

It belongs to the nitronate monooxygenase family. NMO class I subfamily. FMN serves as cofactor.

It carries out the reaction 3 propionate 3-nitronate + 3 O2 + H2O = 3 3-oxopropanoate + 2 nitrate + nitrite + H2O2 + 3 H(+). Nitronate monooxygenase that uses molecular oxygen to catalyze the oxidative denitrification of alkyl nitronates. Acts on propionate 3-nitronate (P3N), the presumed physiological substrate. Probably functions in the detoxification of P3N, a metabolic poison produced by plants and fungi as a defense mechanism. The chain is Probable nitronate monooxygenase from Staphylococcus aureus (strain USA300).